A 98-amino-acid chain; its full sequence is Integration host factor subunit alpha (98 aa).

Residues 49–71 (FGNFDLRDKNQRPGRNPKTGEDI) are disordered.

This sequence belongs to the bacterial histone-like protein family. Heterodimer of an alpha and a beta chain.

Its function is as follows. This protein is one of the two subunits of integration host factor, a specific DNA-binding protein that functions in genetic recombination as well as in transcriptional and translational control. The sequence is that of Integration host factor subunit alpha from Shewanella amazonensis (strain ATCC BAA-1098 / SB2B).